The chain runs to 1088 residues: MRPKTFPATTYSGNSRQRLQEIREGLKQPSKSSVQGLPAGPNSDTSLDAKVLGSKDATRQQQQMRATPKFGPYQKALREIRYSLLPFANESGTSAAAEVNRQMLQELVNAGCDQEMAGRALKQTGSRSIEAALEYISKMGYLDPRNEQIVRVIKQTSPGKGLMPTPVTRRPSFEGTGDSFASYHQLSGTPYEGPSFGADGPTALEEMPRPYVDYLFPGVGPHGPGHQHQHPPKGYGASVEAAGAHFPLQGAHYGRPHLLVPGEPLGYGVQRSPSFQSKTPPETGGYASLPTKGQGGPPGAGLAFPPPAAGLYVPHPHHKQAGPAAHQLHVLGSRSQVFASDSPPQSLLTPSRNSLNVDLYELGSTSVQQWPAATLARRDSLQKPGLEAPPRAHVAFRPDCPVPSRTNSFNSHQPRPGPPGKAEPSLPAPNTVTAVTAAHILHPVKSVRVLRPEPQTAVGPSHPAWVPAPAPAPAPAPAPAAEGLDAKEEHALALGGAGAFPLDVEYGGPDRRCPPPPYPKHLLLRSKSEQYDLDSLCAGMEQSLRAGPNEPEGGDKSRKSAKGDKGGKDKKQIQTSPVPVRKNSRDEEKRESRIKSYSPYAFKFFMEQHVENVIKTYQQKVNRRLQLEQEMAKAGLCEAEQEQMRKILYQKESNYNRLKRAKMDKSMFVKIKTLGIGAFGEVCLACKVDTHALYAMKTLRKKDVLNRNQVAHVKAERDILAEADNEWVVKLYYSFQDKDSLYFVMDYIPGGDMMSLLIRMEVFPEHLARFYIAELTLAIESVHKMGFIHRDIKPDNILIDLDGHIKLTDFGLCTGFRWTHNSKYYQKGSHVRQDSMEPSDLWDDVSNCRCGDRLKTLEQRARKQHQRCLAHSLVGTPNYIAPEVLLRKGYTQLCDWWSVGVILFEMLVGQPPFLAPTPTETQLKVINWENTLHIPAQVKLSPEARDLITKLCCSADHRLGRNGADDLKAHPFFSAIDFSSDIRKQPAPYVPTISHPMDTSNFDPVDEESPWNDASEGSTKAWDTLTSPNNKHPEHAFYEFTFRRFFDDNGYPFRCPKPSGAEASQAESSDLESSDLVDQTEGCQPVYV.

The disordered stretch occupies residues 24-49; it reads EGLKQPSKSSVQGLPAGPNSDTSLDA. The residue at position 83 (Ser-83) is a Phosphoserine; by AURKA. The UBA domain occupies 98 to 139; that stretch reads EVNRQMLQELVNAGCDQEMAGRALKQTGSRSIEAALEYISKM. Residues 101-141 are interaction with ubiquitinated AMOTL2; the sequence is RQMLQELVNAGCDQEMAGRALKQTGSRSIEAALEYISKMGY. Residues 271-280 show a composition bias toward polar residues; the sequence is RSPSFQSKTP. Residues 271–323 form a disordered region; it reads RSPSFQSKTPPETGGYASLPTKGQGGPPGAGLAFPPPAAGLYVPHPHHKQAGP. The residue at position 279 (Thr-279) is a Phosphothreonine. The residue at position 380 (Ser-380) is a Phosphoserine. Disordered stretches follow at residues 383–428 and 454–483; these read KPGL…SLPA and PQTAVGPSHPAWVPAPAPAPAPAPAPAAEG. Over residues 404 to 413 the composition is skewed to polar residues; that stretch reads SRTNSFNSHQ. Pro residues predominate over residues 466–478; it reads VPAPAPAPAPAPA. The PPxY motif motif lies at 515–518; sequence PPPY. The interval 543 to 592 is disordered; the sequence is SLRAGPNEPEGGDKSRKSAKGDKGGKDKKQIQTSPVPVRKNSRDEEKRES. Over residues 553-572 the composition is skewed to basic and acidic residues; sequence GGDKSRKSAKGDKGGKDKKQ. Ser-576 carries the phosphoserine modification. Over residues 583-592 the composition is skewed to basic and acidic residues; it reads NSRDEEKRES. Residues 668-973 form the Protein kinase domain; it reads FVKIKTLGIG…ADDLKAHPFF (306 aa). ATP is bound by residues 674–682 and Lys-697; that span reads LGIGAFGEV. Asp-791 (proton acceptor) is an active-site residue. An AGC-kinase C-terminal domain is found at 974-1052; that stretch reads SAIDFSSDIR…RRFFDDNGYP (79 aa). Residues 994–1022 form a disordered region; the sequence is SHPMDTSNFDPVDEESPWNDASEGSTKAW. Phosphothreonine is present on Thr-1041. Positions 1056–1088 are disordered; that stretch reads PKPSGAEASQAESSDLESSDLVDQTEGCQPVYV.

Belongs to the protein kinase superfamily. AGC Ser/Thr protein kinase family. As to quaternary structure, interacts with and is phosphorylated by AURKA. Binds to AR. Interacts with AJUBA during mitosis and this complex regulates organization of the spindle apparatus through recruitment of gamma-tubulin to the centrosome. Interacts (via PPxY motif) with YAP1 (via WW domains). Interacts with MOB1A and MOB1B. Interacts with LIMD1, WTIP and AJUBA. Interacts with SNAI1. Interacts with WWC1, WWC2 and WWC3 (via their WW domains). Interacts (via UBA domain) with ubiquitinated AMOTL2; the interaction promotes LATS2 phosphorylation of YAP1. It depends on Mg(2+) as a cofactor. Post-translationally, autophosphorylated and phosphorylated during M-phase and the G1/S-phase of the cell cycle. Phosphorylated and activated by STK3/MST2. Phosphorylated by MAP4Ks; in parallel to STK3/MST2 and resulting to its activation. Phosphorylation by NUAK2 may regulate its activity in phosphorylation and inactivation YAP1. Expressed at high levels in heart and skeletal muscle and at lower levels in all other tissues examined.

The protein localises to the cytoplasm. It localises to the cytoskeleton. It is found in the microtubule organizing center. Its subcellular location is the centrosome. The protein resides in the spindle pole. The protein localises to the nucleus. It carries out the reaction L-seryl-[protein] + ATP = O-phospho-L-seryl-[protein] + ADP + H(+). It catalyses the reaction L-threonyl-[protein] + ATP = O-phospho-L-threonyl-[protein] + ADP + H(+). Functionally, negative regulator of YAP1 in the Hippo signaling pathway that plays a pivotal role in organ size control and tumor suppression by restricting proliferation and promoting apoptosis. The core of this pathway is composed of a kinase cascade wherein STK3/MST2 and STK4/MST1, in complex with its regulatory protein SAV1, phosphorylates and activates LATS1/2 in complex with its regulatory protein MOB1, which in turn phosphorylates and inactivates YAP1 oncoprotein and WWTR1/TAZ. Phosphorylation of YAP1 by LATS2 inhibits its translocation into the nucleus to regulate cellular genes important for cell proliferation, cell death, and cell migration. Also phosphorylates YAP1 in response to cell contact inhibition-driven WWP1 ubiquitination of AMOTL2, which results in LATS2 activation. Acts as a tumor suppressor which plays a critical role in centrosome duplication, maintenance of mitotic fidelity and genomic stability. Negatively regulates G1/S transition by down-regulating cyclin E/CDK2 kinase activity. Negative regulator of the androgen receptor. Phosphorylates SNAI1 in the nucleus leading to its nuclear retention and stabilization, which enhances its epithelial-mesenchymal transition and tumor cell invasion/migration activities. This tumor-promoting activity is independent of its effects upon YAP1 or WWTR1/TAZ. Acts as an activator of the NLRP3 inflammasome by mediating phosphorylation of 'Ser-265' of NLRP3 following NLRP3 palmitoylation, promoting NLRP3 activation by NEK7. This Homo sapiens (Human) protein is Serine/threonine-protein kinase LATS2.